Here is a 48-residue protein sequence, read N- to C-terminus: ATP synthase protein 8 (48 aa).

Residues 4 to 24 (LVPFYFINILSFGFLIFTVLL) traverse the membrane as a helical segment.

It belongs to the ATPase protein 8 family. In terms of assembly, F-type ATPases have 2 components, CF(1) - the catalytic core - and CF(0) - the membrane proton channel.

Its subcellular location is the mitochondrion membrane. Functionally, mitochondrial membrane ATP synthase (F(1)F(0) ATP synthase or Complex V) produces ATP from ADP in the presence of a proton gradient across the membrane which is generated by electron transport complexes of the respiratory chain. F-type ATPases consist of two structural domains, F(1) - containing the extramembraneous catalytic core and F(0) - containing the membrane proton channel, linked together by a central stalk and a peripheral stalk. During catalysis, ATP synthesis in the catalytic domain of F(1) is coupled via a rotary mechanism of the central stalk subunits to proton translocation. Part of the complex F(0) domain. Minor subunit located with subunit a in the membrane. This chain is ATP synthase protein 8 (atp8), found in Schizosaccharomyces pombe (strain 972 / ATCC 24843) (Fission yeast).